The following is a 24-amino-acid chain: Coenzyme PQQ synthesis protein A (24 aa).

A cross-link (pyrroloquinoline quinone (Glu-Tyr)) is located at residues 16-20 (EITMY).

Belongs to the PqqA family.

It participates in cofactor biosynthesis; pyrroloquinoline quinone biosynthesis. Its function is as follows. Required for coenzyme pyrroloquinoline quinone (PQQ) biosynthesis. PQQ is probably formed by cross-linking a specific glutamate to a specific tyrosine residue and excising these residues from the peptide. This Variovorax paradoxus (strain S110) protein is Coenzyme PQQ synthesis protein A.